The following is a 338-amino-acid chain: NADH-quinone oxidoreductase subunit H (338 aa).

Transmembrane regions (helical) follow at residues 22–42, 96–116, 121–141, 161–181, 193–213, 249–269, 277–297, and 315–335; these read VVQA…MSFI, VAMA…ALGV, IGLL…LFGG, ISYE…AGSF, VWFI…GVAV, YVNV…GWLA, FVPP…MFVL, and WKIC…VILM.

It belongs to the complex I subunit 1 family. NDH-1 is composed of 14 different subunits. Subunits NuoA, H, J, K, L, M, N constitute the membrane sector of the complex.

The protein resides in the cell inner membrane. It carries out the reaction a quinone + NADH + 5 H(+)(in) = a quinol + NAD(+) + 4 H(+)(out). NDH-1 shuttles electrons from NADH, via FMN and iron-sulfur (Fe-S) centers, to quinones in the respiratory chain. The immediate electron acceptor for the enzyme in this species is believed to be ubiquinone. Couples the redox reaction to proton translocation (for every two electrons transferred, four hydrogen ions are translocated across the cytoplasmic membrane), and thus conserves the redox energy in a proton gradient. This subunit may bind ubiquinone. This chain is NADH-quinone oxidoreductase subunit H, found in Acinetobacter baumannii (strain ATCC 17978 / DSM 105126 / CIP 53.77 / LMG 1025 / NCDC KC755 / 5377).